A 285-amino-acid polypeptide reads, in one-letter code: RNA 5'-monophosphate methyltransferase (285 aa).

The segment at M1–A28 is disordered. S-adenosyl-L-methionine contacts are provided by residues R46, N77, D111, D136–I137, and M165. The region spanning E53–P275 is the Bin3-type SAM domain.

Belongs to the methyltransferase superfamily. In terms of assembly, interacts with DICER1; the interaction may be mediated by RNA.

Its subcellular location is the cytoplasm. It carries out the reaction a 5'-end 5'-phospho-ribonucleoside-RNA + S-adenosyl-L-methionine = a 5'-end (5'-methylphospho)-ribonucleoside-RNA + S-adenosyl-L-homocysteine. The enzyme catalyses a 5'-end 5'-phospho-ribonucleoside-RNA + 2 S-adenosyl-L-methionine = a 5'-end (5'-bismethylphospho)-ribonucleoside-RNA + 2 S-adenosyl-L-homocysteine. O-methyltransferase that specifically monomethylates 5'-monophosphate of cytoplasmic histidyl tRNA (tRNA(His)), acting as a capping enzyme by protecting tRNA(His) from cleavage by DICER1. Also able, with less efficiently, to methylate the 5' monophosphate of a subset of pre-miRNAs, acting as a negative regulator of miRNA processing. The 5' monophosphate of pre-miRNAs is recognized by DICER1 and is required for pre-miRNAs processing: methylation at this position reduces the processing of pre-miRNAs by DICER1. Was also reported to mediate dimethylation of pre-miR-145; however dimethylation cannot be reproduced by another group which observes a monomethylation of pre-miR-145. This chain is RNA 5'-monophosphate methyltransferase, found in Rattus norvegicus (Rat).